Reading from the N-terminus, the 222-residue chain is Recombination protein RecR (222 aa).

The C4-type zinc finger occupies C57–C72. One can recognise a Toprim domain in the interval S80–P173. The segment at A189–H222 is disordered.

This sequence belongs to the RecR family.

May play a role in DNA repair. It seems to be involved in an RecBC-independent recombinational process of DNA repair. It may act with RecF and RecO. This Deinococcus geothermalis (strain DSM 11300 / CIP 105573 / AG-3a) protein is Recombination protein RecR.